The primary structure comprises 155 residues: Ribosomal RNA large subunit methyltransferase H (155 aa).

S-adenosyl-L-methionine-binding positions include leucine 73, glycine 104, and leucine 123 to leucine 128.

Belongs to the RNA methyltransferase RlmH family. As to quaternary structure, homodimer.

Its subcellular location is the cytoplasm. It carries out the reaction pseudouridine(1915) in 23S rRNA + S-adenosyl-L-methionine = N(3)-methylpseudouridine(1915) in 23S rRNA + S-adenosyl-L-homocysteine + H(+). In terms of biological role, specifically methylates the pseudouridine at position 1915 (m3Psi1915) in 23S rRNA. The sequence is that of Ribosomal RNA large subunit methyltransferase H from Chromohalobacter salexigens (strain ATCC BAA-138 / DSM 3043 / CIP 106854 / NCIMB 13768 / 1H11).